Consider the following 206-residue polypeptide: uncharacterized protein (206 aa).

Residues 147–206 (REEKAQKSKSKSRNQDERGSPLDERLGPKVSDLTLMERIFQVRRKPRKSRRDRRSRVSKR) are disordered. The segment covering 159–173 (RNQDERGSPLDERLG) has biased composition (basic and acidic residues). Residues 187–206 (QVRRKPRKSRRDRRSRVSKR) show a composition bias toward basic residues.

This is an uncharacterized protein from Schizosaccharomyces pombe (strain 972 / ATCC 24843) (Fission yeast).